Here is a 233-residue protein sequence, read N- to C-terminus: Proteasome subunit alpha (233 aa).

It belongs to the peptidase T1A family. As to quaternary structure, the 20S proteasome core is composed of 14 alpha and 14 beta subunits that assemble into four stacked heptameric rings, resulting in a barrel-shaped structure. The two inner rings, each composed of seven catalytic beta subunits, are sandwiched by two outer rings, each composed of seven alpha subunits. The catalytic chamber with the active sites is on the inside of the barrel. Has a gated structure, the ends of the cylinder being occluded by the N-termini of the alpha-subunits. Is capped at one or both ends by the proteasome regulatory ATPase, PAN. In terms of processing, the N-terminus is blocked.

The protein localises to the cytoplasm. The formation of the proteasomal ATPase PAN-20S proteasome complex, via the docking of the C-termini of PAN into the intersubunit pockets in the alpha-rings, triggers opening of the gate for substrate entry. Interconversion between the open-gate and close-gate conformations leads to a dynamic regulation of the 20S proteasome proteolysis activity. Its function is as follows. Component of the proteasome core, a large protease complex with broad specificity involved in protein degradation. The T.acidophilum proteasome is able to cleave oligopeptides after Tyr, Leu, Phe, and to a lesser extent after Glu and Arg. Thus, displays chymotrypsin-like activity and low level of caspase-like and trypsin-like activities. This Thermoplasma acidophilum (strain ATCC 25905 / DSM 1728 / JCM 9062 / NBRC 15155 / AMRC-C165) protein is Proteasome subunit alpha.